Here is a 408-residue protein sequence, read N- to C-terminus: Aminopeptidase T (408 aa).

Positions 250, 316, 340, 345, 376, and 378 each coordinate a divalent metal cation.

It belongs to the peptidase M29 family. As to quaternary structure, homodimer. It depends on Co(2+) as a cofactor. Zn(2+) is required as a cofactor. Mg(2+) serves as cofactor.

In terms of biological role, metal-dependent exopeptidase. The sequence is that of Aminopeptidase T from Thermus aquaticus.